The chain runs to 207 residues: dITP/XTP pyrophosphatase (207 aa).

Residue 8–13 (TNNKNK) coordinates substrate. Catalysis depends on aspartate 72, which acts as the Proton acceptor. Aspartate 72 is a binding site for Mg(2+). Substrate-binding positions include serine 73, 157–160 (FGYD), lysine 180, and 185–186 (HR).

Belongs to the HAM1 NTPase family. Homodimer. Mg(2+) serves as cofactor.

It carries out the reaction XTP + H2O = XMP + diphosphate + H(+). The enzyme catalyses dITP + H2O = dIMP + diphosphate + H(+). The catalysed reaction is ITP + H2O = IMP + diphosphate + H(+). Functionally, pyrophosphatase that catalyzes the hydrolysis of nucleoside triphosphates to their monophosphate derivatives, with a high preference for the non-canonical purine nucleotides XTP (xanthosine triphosphate), dITP (deoxyinosine triphosphate) and ITP. Seems to function as a house-cleaning enzyme that removes non-canonical purine nucleotides from the nucleotide pool, thus preventing their incorporation into DNA/RNA and avoiding chromosomal lesions. This Lactobacillus johnsonii (strain CNCM I-12250 / La1 / NCC 533) protein is dITP/XTP pyrophosphatase.